Consider the following 493-residue polypeptide: Tripartite motif-containing protein 5 (493 aa).

At Ala2 the chain carries N-acetylalanine. The RING-type zinc-finger motif lies at 15–58 (CPICLELLTQPLSLDCGHSFCQACLTANHKTSMPDGERSCPVCR). Ser85 is modified (phosphoserine). The B box-type zinc finger occupies 90 to 131 (QKVDHCARHGEKLLLFCREDRKVICWLCERSQEHRGHHTFLM). 4 residues coordinate Zn(2+): Cys95, His98, Cys117, and His123. Positions 130-240 (LMEEVAQEYQ…LISDLEHRLQ (111 aa)) form a coiled coil. Residues 185 to 198 (FEQLRHILDWVESN) are required for interaction with GABARAP and for autophagy. The B30.2/SPRY domain occupies 281-493 (LQVTLEVLRE…VPMTLCSPSS (213 aa)).

Belongs to the TRIM/RBCC family. Can form homodimers and homotrimers. In addition to lower-order dimerization, also exhibits a higher-order multimerization and both low- and high-order multimerizations are essential for its restriction activity. Interacts with BTBD1 and BTBD2. Interacts with PSMC4, PSMC5, PSMD7 and HSPA8/HSC70. Interacts (via B30.2/SPRY domain) with HSPA1A/B. Interacts with PSMC2, MAP3K7/TAK1, TAB2 and TAB3. Interacts with SQSTM1. Interacts with TRIM6 and TRIM34. Interacts with ULK1 (phosphorylated form), GABARAP, GABARAPL1, GABARAPL2, MAP1LC3A, MAP1LC3C and BECN1. Post-translationally, degraded in a proteasome-independent fashion in the absence of viral infection but in a proteasome-dependent fashion following exposure to restriction sensitive virus. In terms of processing, autoubiquitinated in a RING finger- and UBE2D2-dependent manner. Monoubiquitinated by TRIM21. Deubiquitinated by Yersinia YopJ. Ubiquitination may not lead to proteasomal degradation.

It localises to the cytoplasm. Its subcellular location is the nucleus. The catalysed reaction is S-ubiquitinyl-[E2 ubiquitin-conjugating enzyme]-L-cysteine + [acceptor protein]-L-lysine = [E2 ubiquitin-conjugating enzyme]-L-cysteine + N(6)-ubiquitinyl-[acceptor protein]-L-lysine.. It participates in protein modification; protein ubiquitination. In terms of biological role, capsid-specific restriction factor that prevents infection from non-host-adapted retroviruses. Blocks viral replication early in the life cycle, after viral entry but before reverse transcription. In addition to acting as a capsid-specific restriction factor, also acts as a pattern recognition receptor that activates innate immune signaling in response to the retroviral capsid lattice. Binding to the viral capsid triggers its E3 ubiquitin ligase activity, and in concert with the heterodimeric ubiquitin conjugating enzyme complex UBE2V1-UBE2N (also known as UBC13-UEV1A complex) generates 'Lys-63'-linked polyubiquitin chains, which in turn are catalysts in the autophosphorylation of the MAP3K7/TAK1 complex (includes TAK1, TAB2, and TAB3). Activation of the MAP3K7/TAK1 complex by autophosphorylation results in the induction and expression of NF-kappa-B and MAPK-responsive inflammatory genes, thereby leading to an innate immune response in the infected cell. Plays a role in regulating autophagy through activation of autophagy regulator BECN1 by causing its dissociation from its inhibitors BCL2 and TAB2. The sequence is that of Tripartite motif-containing protein 5 (TRIM5) from Hylobates lar (Lar gibbon).